A 339-amino-acid polypeptide reads, in one-letter code: Delta(9)-fatty-acid desaturase fat-6 (339 aa).

Transmembrane regions (helical) follow at residues 52-72, 77-97, 195-215, and 219-241; these read VALF…LIFE, TVIF…AGAH, YFPL…VYFW, and AFIA…TWCI.

This sequence belongs to the fatty acid desaturase type 1 family. As to expression, expressed in the intestine in adult worms and in all four larval stages. Additional expression in the hypodermis in all life stages.

The protein resides in the membrane. The enzyme catalyses octadecanoyl-CoA + 2 Fe(II)-[cytochrome b5] + O2 + 2 H(+) = (9Z)-octadecenoyl-CoA + 2 Fe(III)-[cytochrome b5] + 2 H2O. It carries out the reaction hexadecanoyl-CoA + 2 Fe(II)-[cytochrome b5] + O2 + 2 H(+) = (9Z)-hexadecenoyl-CoA + 2 Fe(III)-[cytochrome b5] + 2 H2O. The catalysed reaction is heptadecanoyl-CoA + 2 Fe(II)-[cytochrome b5] + O2 + 2 H(+) = (9Z)-heptadecenoyl-CoA + 2 Fe(III)-[cytochrome b5] + 2 H2O. It catalyses the reaction (11E)-octadecenoyl-CoA + 2 Fe(II)-[cytochrome b5] + O2 + 2 H(+) = (9Z,11E)-octadecadienoyl-CoA + 2 Fe(III)-[cytochrome b5] + 2 H2O. Its pathway is lipid metabolism; monounsaturated fatty acid biosynthesis. The protein operates within lipid metabolism; fatty acid metabolism. Its function is as follows. Delta(9)-fatty acid desaturase that acts preferentially on stearoyl-CoA (octadecanoyl-CoA) producing the monounsaturated oleoyl-CoA ((9Z)-octadecenoyl-CoA), one of the most abundant monounsaturated fatty acid in Caenorhabditis elegans phospholipids and triacylglycerols. Also acts on palmitoyl-CoA (hexadecanoyl-CoA), heptadecanoyl-CoA and (11E)-octadecenoyl-CoA (trans-vaccenoyl-CoA), the monounsaturated fatty acids (MUFAs) produced are further used as substrates to synthesize polyunsaturated fatty acids (PUFAs) by several other desaturases and elongases. Unlike plants, Caenorhabditis elegans desaturases seem to use fatty acyl-CoAs as substrates. This chain is Delta(9)-fatty-acid desaturase fat-6 (fat-6), found in Caenorhabditis elegans.